A 331-amino-acid polypeptide reads, in one-letter code: Nucleoporin Nup35 (331 aa).

Disordered regions lie at residues 1 to 63 and 79 to 110; these read MEPM…HELN and AHTAVGANSSTTAHGQTHSHHQTGPPTQGLFD. Polar residues-rich tracts occupy residues 8–20, 35–56, and 84–104; these read SPVNSPGSNQTQY, HKNTLSPKTGRSNISFATSPGG, and GANSSTTAHGQTHSHHQTGPP. The RRM Nup35-type domain occupies 187-268; that stretch reads RLSDFWVTIF…SRCTDRSVID (82 aa).

Belongs to the Nup35 family. As to quaternary structure, interacts with Nup154.

It is found in the nucleus. Its subcellular location is the nuclear pore complex. Functions as a component of the nuclear pore complex (NPC). May have a role in the organization of the inner nuclear membrane proteins at the nuclear envelope together with Nup154. In Drosophila melanogaster (Fruit fly), this protein is Nucleoporin Nup35.